Here is a 198-residue protein sequence, read N- to C-terminus: ATP-dependent Clp protease proteolytic subunit 1 (198 aa).

S98 acts as the Nucleophile in catalysis. The active site involves H123.

This sequence belongs to the peptidase S14 family. As to quaternary structure, fourteen ClpP subunits assemble into 2 heptameric rings which stack back to back to give a disk-like structure with a central cavity, resembling the structure of eukaryotic proteasomes.

The protein localises to the cytoplasm. The catalysed reaction is Hydrolysis of proteins to small peptides in the presence of ATP and magnesium. alpha-casein is the usual test substrate. In the absence of ATP, only oligopeptides shorter than five residues are hydrolyzed (such as succinyl-Leu-Tyr-|-NHMec, and Leu-Tyr-Leu-|-Tyr-Trp, in which cleavage of the -Tyr-|-Leu- and -Tyr-|-Trp bonds also occurs).. Its function is as follows. Cleaves peptides in various proteins in a process that requires ATP hydrolysis. Has a chymotrypsin-like activity. Plays a major role in the degradation of misfolded proteins. ClpXP1 is involved in the complete degradation of the Site-2 clipped anti-sigma-W factor RsiW. This results in the release of SigW and the transcription activation of the genes under the control of the sigma-W factor. In Bacillus licheniformis (strain ATCC 14580 / DSM 13 / JCM 2505 / CCUG 7422 / NBRC 12200 / NCIMB 9375 / NCTC 10341 / NRRL NRS-1264 / Gibson 46), this protein is ATP-dependent Clp protease proteolytic subunit 1.